The chain runs to 278 residues: Protein mtd-1 (278 aa).

The N-terminal stretch at 1–17 (MRSSLLLLVFFLSIGWA) is a signal peptide. Residues 18–254 (RYCVHNEKSW…EMLEEIEARK (237 aa)) lie on the Extracellular side of the membrane. N-linked (GlcNAc...) asparagine glycosylation is found at asparagine 40, asparagine 73, asparagine 163, and asparagine 190. Residues 255–271 (VPVDSSAPVNIILSIAF) traverse the membrane as a helical segment. The Cytoplasmic segment spans residues 272 to 278 (SIFLIHF).

Its subcellular location is the cell membrane. In terms of biological role, plays a role in mechanosensory transduction (touch sensitivity). This is Protein mtd-1 from Caenorhabditis elegans.